Reading from the N-terminus, the 362-residue chain is Histidinol-phosphate aminotransferase 2 (362 aa).

Residue K222 is modified to N6-(pyridoxal phosphate)lysine.

Belongs to the class-II pyridoxal-phosphate-dependent aminotransferase family. Histidinol-phosphate aminotransferase subfamily. As to quaternary structure, homodimer. Pyridoxal 5'-phosphate serves as cofactor.

It catalyses the reaction L-histidinol phosphate + 2-oxoglutarate = 3-(imidazol-4-yl)-2-oxopropyl phosphate + L-glutamate. It participates in amino-acid biosynthesis; L-histidine biosynthesis; L-histidine from 5-phospho-alpha-D-ribose 1-diphosphate: step 7/9. The protein is Histidinol-phosphate aminotransferase 2 of Carboxydothermus hydrogenoformans (strain ATCC BAA-161 / DSM 6008 / Z-2901).